A 104-amino-acid polypeptide reads, in one-letter code: Proteasome subunit beta type-8 (104 aa).

It belongs to the peptidase T1B family. As to quaternary structure, the 26S proteasome consists of a 20S proteasome core and two 19S regulatory subunits. The 20S proteasome core is composed of 28 subunits that are arranged in four stacked rings, resulting in a barrel-shaped structure. The two end rings are each formed by seven alpha subunits, and the two central rings are each formed by seven beta subunits. The catalytic chamber with the active sites is on the inside of the barrel. Component of the immunoproteasome, where it displaces the equivalent housekeeping subunit PSMB5. Component of the spermatoproteasome, a form of the proteasome specifically found in testis. Directly interacts with POMP.

The protein resides in the cytoplasm. It is found in the nucleus. The catalysed reaction is Cleavage of peptide bonds with very broad specificity.. The proteasome is a multicatalytic proteinase complex which is characterized by its ability to cleave peptides with Arg, Phe, Tyr, Leu, and Glu adjacent to the leaving group at neutral or slightly basic pH. The proteasome has an ATP-dependent proteolytic activity. This subunit is involved in antigen processing to generate class I binding peptides. May participate in the generation of spliced peptides resulting from the ligation of two separate proteasomal cleavage products that are not contiguous in the parental protein. Required for adipocyte differentiation. This is Proteasome subunit beta type-8 (PSMB8) from Sus scrofa (Pig).